The primary structure comprises 124 residues: Ribonuclease pancreatic (124 aa).

A compositionally biased stretch (basic and acidic residues) spans 1–13 (KESAAAKFERQHM). Residues 1–24 (KESAAAKFERQHMDPSTSSASSSN) form a disordered region. K7 and R10 together coordinate substrate. Residue H12 is the Proton acceptor of the active site. 4 disulfides stabilise this stretch: C26-C84, C40-C95, C58-C110, and C65-C72. Residues 41-45 (KPVNT), K66, and R85 contribute to the substrate site. H119 acts as the Proton donor in catalysis.

Belongs to the pancreatic ribonuclease family. As to quaternary structure, monomer. Interacts with and forms tight 1:1 complexes with RNH1. Dimerization of two such complexes may occur. Interaction with RNH1 inhibits this protein. Pancreas.

The protein resides in the secreted. It catalyses the reaction an [RNA] containing cytidine + H2O = an [RNA]-3'-cytidine-3'-phosphate + a 5'-hydroxy-ribonucleotide-3'-[RNA].. It carries out the reaction an [RNA] containing uridine + H2O = an [RNA]-3'-uridine-3'-phosphate + a 5'-hydroxy-ribonucleotide-3'-[RNA].. Endonuclease that catalyzes the cleavage of RNA on the 3' side of pyrimidine nucleotides. Acts on single-stranded and double-stranded RNA. This is Ribonuclease pancreatic (RNASE1) from Cervus elaphus (Red deer).